A 260-amino-acid polypeptide reads, in one-letter code: O-antigen export system permease protein RfbA (260 aa).

7 helical membrane passes run Phe31 to Leu51, Phe63 to Gly83, Val109 to Met129, Val139 to Ile159, Ile173 to Thr193, Ser201 to Tyr221, and Glu229 to Phe249. One can recognise an ABC transmembrane type-2 domain in the interval Leu32 to Arg252.

Belongs to the ABC-2 integral membrane protein family.

The protein localises to the cell inner membrane. In terms of biological role, may form an ATP-driven O-antigen export apparatus, in association with RfbB. In Myxococcus xanthus, this protein is O-antigen export system permease protein RfbA (rfbA).